Consider the following 520-residue polypeptide: Cobyric acid synthase (520 aa).

Positions 275–453 constitute a GATase cobBQ-type domain; it reads VLRVAVIRLP…WHGVLENDAF (179 aa). C356 serves as the catalytic Nucleophile. The active site involves H445.

The protein belongs to the CobB/CobQ family. CobQ subfamily.

It functions in the pathway cofactor biosynthesis; adenosylcobalamin biosynthesis. Catalyzes amidations at positions B, D, E, and G on adenosylcobyrinic A,C-diamide. NH(2) groups are provided by glutamine, and one molecule of ATP is hydrogenolyzed for each amidation. The protein is Cobyric acid synthase of Frankia casuarinae (strain DSM 45818 / CECT 9043 / HFP020203 / CcI3).